The primary structure comprises 136 residues: UPF0275 protein PM0493 (136 aa).

This sequence belongs to the UPF0275 family.

This Pasteurella multocida (strain Pm70) protein is UPF0275 protein PM0493.